The following is a 189-amino-acid chain: Putative manganese efflux pump MntP (189 aa).

Transmembrane regions (helical) follow at residues proline 3–glycine 23, isoleucine 41–alanine 61, valine 65–isoleucine 85, tryptophan 106–phenylalanine 128, glycine 141–valine 161, and methionine 168–alanine 188.

It belongs to the MntP (TC 9.B.29) family.

Its subcellular location is the cell inner membrane. In terms of biological role, probably functions as a manganese efflux pump. In Pseudomonas aeruginosa (strain UCBPP-PA14), this protein is Putative manganese efflux pump MntP.